Here is a 659-residue protein sequence, read N- to C-terminus: Macrolide export ATP-binding/permease protein MacB (659 aa).

Residues Ile10–Ser249 enclose the ABC transporter domain. Residue Gly47–Ser54 participates in ATP binding. The next 4 helical transmembrane spans lie at Ser287–Gly307, Leu538–Leu558, Ile594–Trp614, and Val619–Phe639.

It belongs to the ABC transporter superfamily. Macrolide exporter (TC 3.A.1.122) family. In terms of assembly, homodimer.

It localises to the cell inner membrane. In terms of biological role, non-canonical ABC transporter that contains transmembrane domains (TMD), which form a pore in the inner membrane, and an ATP-binding domain (NBD), which is responsible for energy generation. Confers resistance against macrolides. The sequence is that of Macrolide export ATP-binding/permease protein MacB from Nitrosomonas europaea (strain ATCC 19718 / CIP 103999 / KCTC 2705 / NBRC 14298).